The sequence spans 312 residues: Protein dif-1 (312 aa).

Solcar repeat units lie at residues serine 2–leucine 93, methionine 102–lysine 193, and leucine 203–alanine 289. 6 helical membrane-spanning segments follow: residues leucine 5–phenylalanine 25, methionine 69–valine 89, phenylalanine 104–proline 124, threonine 172–lysine 192, leucine 209–leucine 229, and leucine 261–glycine 282.

It belongs to the mitochondrial carrier (TC 2.A.29) family.

The protein resides in the mitochondrion inner membrane. Its function is as follows. Seems to play a role in the maintenance of tissue differentiation in the developing embryo, but not for its initiation. In Caenorhabditis elegans, this protein is Protein dif-1 (dif-1).